Reading from the N-terminus, the 500-residue chain is Histidine ammonia-lyase (500 aa).

A cross-link (5-imidazolinone (Ala-Gly)) is located at residues 142–144; the sequence is ASG. 2,3-didehydroalanine (Ser) is present on Ser143.

The protein belongs to the PAL/histidase family. Contains an active site 4-methylidene-imidazol-5-one (MIO), which is formed autocatalytically by cyclization and dehydration of residues Ala-Ser-Gly.

The protein localises to the cytoplasm. The enzyme catalyses L-histidine = trans-urocanate + NH4(+). It functions in the pathway amino-acid degradation; L-histidine degradation into L-glutamate; N-formimidoyl-L-glutamate from L-histidine: step 1/3. In Macrococcus caseolyticus (strain JCSC5402) (Macrococcoides caseolyticum), this protein is Histidine ammonia-lyase.